The primary structure comprises 456 residues: Cysteine--tRNA ligase (456 aa).

A Zn(2+)-binding site is contributed by C28. The short motif at 30–40 is the 'HIGH' region element; the sequence is ITVYDHCHLGH. Zn(2+) contacts are provided by C209, H234, and E238. Residues 266–270 carry the 'KMSKS' region motif; it reads KMAKS. K269 provides a ligand contact to ATP.

Belongs to the class-I aminoacyl-tRNA synthetase family. Monomer. The cofactor is Zn(2+).

The protein resides in the cytoplasm. The enzyme catalyses tRNA(Cys) + L-cysteine + ATP = L-cysteinyl-tRNA(Cys) + AMP + diphosphate. This is Cysteine--tRNA ligase from Legionella pneumophila (strain Corby).